The following is a 262-amino-acid chain: DNA repair protein RecO (262 aa).

This sequence belongs to the RecO family.

Involved in DNA repair and RecF pathway recombination. This Acidovorax ebreus (strain TPSY) (Diaphorobacter sp. (strain TPSY)) protein is DNA repair protein RecO.